The primary structure comprises 236 residues: Leucyl/phenylalanyl-tRNA--protein transferase (236 aa).

Belongs to the L/F-transferase family.

It is found in the cytoplasm. The enzyme catalyses N-terminal L-lysyl-[protein] + L-leucyl-tRNA(Leu) = N-terminal L-leucyl-L-lysyl-[protein] + tRNA(Leu) + H(+). It catalyses the reaction N-terminal L-arginyl-[protein] + L-leucyl-tRNA(Leu) = N-terminal L-leucyl-L-arginyl-[protein] + tRNA(Leu) + H(+). The catalysed reaction is L-phenylalanyl-tRNA(Phe) + an N-terminal L-alpha-aminoacyl-[protein] = an N-terminal L-phenylalanyl-L-alpha-aminoacyl-[protein] + tRNA(Phe). Functionally, functions in the N-end rule pathway of protein degradation where it conjugates Leu, Phe and, less efficiently, Met from aminoacyl-tRNAs to the N-termini of proteins containing an N-terminal arginine or lysine. The polypeptide is Leucyl/phenylalanyl-tRNA--protein transferase (Shewanella oneidensis (strain ATCC 700550 / JCM 31522 / CIP 106686 / LMG 19005 / NCIMB 14063 / MR-1)).